The sequence spans 171 residues: Co-chaperone protein HscB (171 aa).

Residues 2-74 (DYFTLFGLPA…LTRAEYLLSL (73 aa)) enclose the J domain.

Belongs to the HscB family. As to quaternary structure, interacts with HscA and stimulates its ATPase activity. Interacts with IscU.

Co-chaperone involved in the maturation of iron-sulfur cluster-containing proteins. Seems to help targeting proteins to be folded toward HscA. This Salmonella schwarzengrund (strain CVM19633) protein is Co-chaperone protein HscB.